The following is a 344-amino-acid chain: N-acetyl-gamma-glutamyl-phosphate reductase (344 aa).

Cys-149 is an active-site residue.

The protein belongs to the NAGSA dehydrogenase family. Type 1 subfamily.

Its subcellular location is the cytoplasm. The enzyme catalyses N-acetyl-L-glutamate 5-semialdehyde + phosphate + NADP(+) = N-acetyl-L-glutamyl 5-phosphate + NADPH + H(+). It participates in amino-acid biosynthesis; L-arginine biosynthesis; N(2)-acetyl-L-ornithine from L-glutamate: step 3/4. In terms of biological role, catalyzes the NADPH-dependent reduction of N-acetyl-5-glutamyl phosphate to yield N-acetyl-L-glutamate 5-semialdehyde. The protein is N-acetyl-gamma-glutamyl-phosphate reductase of Halorhodospira halophila (strain DSM 244 / SL1) (Ectothiorhodospira halophila (strain DSM 244 / SL1)).